The primary structure comprises 96 residues: Large ribosomal subunit protein uL23 (96 aa).

The protein belongs to the universal ribosomal protein uL23 family. Part of the 50S ribosomal subunit. Contacts protein L29, and trigger factor when it is bound to the ribosome.

One of the early assembly proteins it binds 23S rRNA. One of the proteins that surrounds the polypeptide exit tunnel on the outside of the ribosome. Forms the main docking site for trigger factor binding to the ribosome. In Brevibacillus brevis (strain 47 / JCM 6285 / NBRC 100599), this protein is Large ribosomal subunit protein uL23.